The chain runs to 557 residues: Potassium-transporting ATPase potassium-binding subunit (557 aa).

Helical transmembrane passes span 5-25, 63-83, 132-152, 170-190, 253-273, 283-303, 329-349, 356-376, 379-399, 416-436, 484-504, and 526-546; these read GFLL…PLGS, LCAI…MLLG, GLTV…FAFI, LLRI…LFLI, FVQM…FGEV, LLWA…WAEV, VLVS…AVIA, ALGG…FGGV, GLYG…LMIG, LTAL…ALAM, LLAF…MAIA, and LFVG…FIPA.

Belongs to the KdpA family. In terms of assembly, the system is composed of three essential subunits: KdpA, KdpB and KdpC.

It localises to the cell inner membrane. Functionally, part of the high-affinity ATP-driven potassium transport (or Kdp) system, which catalyzes the hydrolysis of ATP coupled with the electrogenic transport of potassium into the cytoplasm. This subunit binds the periplasmic potassium ions and delivers the ions to the membrane domain of KdpB through an intramembrane tunnel. This is Potassium-transporting ATPase potassium-binding subunit from Shigella boydii serotype 18 (strain CDC 3083-94 / BS512).